We begin with the raw amino-acid sequence, 101 residues long: Thiosulfate sulfurtransferase GlpE (101 aa).

Positions 17–101 (EAKSVQIVDI…GFSAWHEANA (85 aa)) constitute a Rhodanese domain. The active-site Cysteine persulfide intermediate is C65.

The protein belongs to the GlpE family.

The protein resides in the cytoplasm. The catalysed reaction is thiosulfate + hydrogen cyanide = thiocyanate + sulfite + 2 H(+). The enzyme catalyses thiosulfate + [thioredoxin]-dithiol = [thioredoxin]-disulfide + hydrogen sulfide + sulfite + 2 H(+). Functionally, transferase that catalyzes the transfer of sulfur from thiosulfate to thiophilic acceptors such as cyanide or dithiols. May function in a CysM-independent thiosulfate assimilation pathway by catalyzing the conversion of thiosulfate to sulfite, which can then be used for L-cysteine biosynthesis. This chain is Thiosulfate sulfurtransferase GlpE, found in Shewanella oneidensis (strain ATCC 700550 / JCM 31522 / CIP 106686 / LMG 19005 / NCIMB 14063 / MR-1).